We begin with the raw amino-acid sequence, 330 residues long: MDDFRNKLRNFLNNECLWVKNVACTSFTKVYCATTAVSPFFKPISPQGVPDKHYINVTLIILKPKKSHPYITVYINDLAVDCCSTEILQVKPVPCSHFSLIYFGPLIAPPHNVQIPANLSIKASKKSHLTKNQVIFTSKVIHPERLPDGYKSASLIGACAWYSEGAIFQHFLSTDYMSLCPAFKEFPSLSRILSLLTRCDDLSCVPCYGEKIHVNCQSGYTDSDCDGKSNSCPCITSCTALKKDIVPITGHRNLLSLLFDATIQHNITSIKFFSPQTPTTVNNVFCGVLDTGETVECTCEAWNLLMFSDFISRQMIYNCQIMKRFCLRSC.

Belongs to the herpesviridae cytoplasmic envelopment protein 2 family. As to quaternary structure, interacts with cytoplasmic envelopment protein 3 and with the capsid.

Its subcellular location is the virion tegument. The protein localises to the host cytoplasm. It is found in the host nucleus. In terms of biological role, plays a critical role in cytoplasmic virus egress. Participates in the final step of tegumentation and envelope acquisition within the host cytoplasm by directly interacting with the capsid. Upon virion binding to target cell, a signaling cascade is triggered to disrupt the interaction with the capsid, thereby preparing capsid uncoating. This is Cytoplasmic envelopment protein 2 (33) from Saimiriine herpesvirus 2 (strain 11) (SaHV-2).